A 374-amino-acid polypeptide reads, in one-letter code: Fatty acid conjugase FAC2 A (374 aa).

A run of 2 helical transmembrane segments spans residues 50-70 (IIVTCILFYVASNYIPMLPGF) and 74-94 (IVWPVYWISQGVFLGRLWMIG). The Histidine box-1 signature appears at 95 to 99 (HECGH). The Histidine box-2 motif lies at 131–135 (HRNHH). 3 helical membrane-spanning segments follow: residues 168–188 (MGLMITMLCKLTFGYAAYIMF), 219–239 (VLFSDVGICIVLYACYRIVMV), and 246–266 (FYVYGIPWVIMSAILFAATYL). Positions 306 to 310 (HVIHH) match the Histidine box-3 motif.

This sequence belongs to the fatty acid desaturase type 1 family. Expressed exclusively in the developing seeds. Not detected in leaves or flower buds.

It is found in the microsome membrane. The enzyme catalyses a (9Z,12Z)-octadecadienoyl-containing glycerolipid + AH2 + O2 = a (8E,10E,12Z)-octadecatrienoyl-containing glycerolipid + A + 2 H2O. Its pathway is lipid metabolism; polyunsaturated fatty acid biosynthesis. In terms of biological role, fatty acid conjugase converting 18:2(9Z, 12Z) to calendic acid 18:3(8E, 10E, 12Z). Converts alpha-linolenic acid (18:3(9Z, 12Z, 15Z)) into 18:4(8E, 10E, 12Z, 15Z). Also has weak activity on the mono-unsaturates 16:1(9Z) and 18:1(9Z) producing two conjugated double bonds at delta(8) and delta(10) position. The polypeptide is Fatty acid conjugase FAC2 A (Calendula officinalis (Pot marigold)).